A 168-amino-acid chain; its full sequence is Endoribonuclease YbeY (168 aa).

H122, H126, and H132 together coordinate Zn(2+).

Belongs to the endoribonuclease YbeY family. Zn(2+) serves as cofactor.

It is found in the cytoplasm. In terms of biological role, single strand-specific metallo-endoribonuclease involved in late-stage 70S ribosome quality control and in maturation of the 3' terminus of the 16S rRNA. This chain is Endoribonuclease YbeY, found in Brucella abortus (strain 2308).